The primary structure comprises 577 residues: Leucine-rich repeat protein soc-2 homolog (577 aa).

Basic and acidic residues-rich tracts occupy residues 1 to 10 and 33 to 48; these read MRRTKGRTDS and STAH…EAKK. The segment at 1-71 is disordered; the sequence is MRRTKGRTDS…PTVKKRSTPS (71 aa). 20 LRR repeats span residues 87–109, 110–131, 133–155, 156–177, 179–201, 202–223, 225–246, 248–269, 271–292, 294–315, 318–339, 342–363, 366–387, 389–410, 412–434, 435–456, 458–479, 481–502, 504–526, and 528–549; these read GATR…KELT, SLRE…VGLL, NLET…VKLT, KLKV…IYKL, TLTT…GNLK, LLER…IGQL, HLVT…IGNC, HMTS…IGRL, AMTR…LANC, GIDE…LLSS, NLTS…PPKQ, QVNT…VFNK, YLSK…FGSW, SLVE…IQWL, NLEV…GALR, KLRV…IEYL, SLER…IGYL, SVTY…IGNM, SLEQ…LVLC, and SLQI…IVAG.

The protein belongs to the SHOC2 family.

Its function is as follows. Acts as a Ras effector and participates in MAPK pathway activation. Probably acts as a scaffolding protein in a protein phosphatase complex that specifically dephosphorylates Raf kinase and stimulate Raf activity at specialized signaling complexes upon Ras activation. This chain is Leucine-rich repeat protein soc-2 homolog, found in Nematostella vectensis (Starlet sea anemone).